The sequence spans 342 residues: Ferredoxin--NADP reductase (342 aa).

Positions 17, 36, 44, 49, 89, 124, 289, and 330 each coordinate FAD.

The protein belongs to the ferredoxin--NADP reductase type 2 family. In terms of assembly, homodimer. FAD is required as a cofactor.

The enzyme catalyses 2 reduced [2Fe-2S]-[ferredoxin] + NADP(+) + H(+) = 2 oxidized [2Fe-2S]-[ferredoxin] + NADPH. In Rhodopseudomonas palustris (strain BisB18), this protein is Ferredoxin--NADP reductase.